Here is a 219-residue protein sequence, read N- to C-terminus: Factor in the germline alpha (219 aa).

A bHLH domain is found at 65–117; that stretch reads ERRRVANAKERERIKNLNRGFARLKALVPFLPQSRKPSKVDILKGATEYIQVL. Residues 124–151 form a disordered region; sequence AKDSKKQDPDEQSYSNNSSESHTSSARQ. The span at 136–148 shows a compositional bias: low complexity; the sequence is SYSNNSSESHTSS.

Heterodimer with TCF3/isoform E12. In terms of tissue distribution, germ cells. Expressed in the fetal ovary, but not by a range of other tissues. Expression increases across mid-gestation, rising some 40-fold by the time of primordial follicle formation.

It is found in the nucleus. Its function is as follows. Germline specific transcription factor implicated in postnatal oocyte-specific gene expression. Plays a key regulatory role in the expression of multiple oocyte-specific genes, including those that initiate folliculogenesis and those that encode the zona pellucida (ZP1, ZP2 and ZP3) required for fertilization and early embryonic survival. Essential for oocytes to survive and form primordial follicles. The persistence of FIGLA in adult females suggests that it may regulate additional pathways that are essential for normal ovarian development. Binds to the E-box (5'-CANNTG-3') of the ZPs (ZP1, ZP2, ZP3) promoters. The chain is Factor in the germline alpha (FIGLA) from Homo sapiens (Human).